Here is a 141-residue protein sequence, read N- to C-terminus: Bombinins BLP-7/H-BO (141 aa).

The first 18 residues, 1–18 (MNFKYIIAVSFLIASTYA), serve as a signal peptide directing secretion. The propeptide occupies 19–43 (RSVKNDEQSLSQRDVLDEESLREIR). Asparagine 70 is modified (asparagine amide). A propeptide spanning residues 74 to 123 (TAEEHEVMKRLEAVMRDLDSLDHPEEASEKETRGFNQEEIANLFTKKEKR) is cleaved from the precursor. A Leucine amide modification is found at leucine 140.

Belongs to the bombinin family. As to expression, expressed by the skin glands.

It is found in the secreted. Antimicrobial peptide with activity against Gram-positive and -negative bacteria and fungi. Shows activity against P.acnes (MIC=5 uM), E.coli (MIC=5-6.3 uM), S.aureus (MIC=5-6.3 uM), M.luteus, S.cerevisiae and C.albicans (MIC=10-12.5 uM). Also reduces the production of interleukin (IL)-8 and granulocyte-macrophage colony stimulating factor (CSF2) in normal human epidermal keratinocytes (NHEKs). Shows anticancer activity against three human hepatoma cell lines. In vivo, using the rat ear edema model, suppress P.acnes-induced skin inflammation, significantly reducing the ear thickness. Shows weak hemolytic activity against human erythrocytes. In terms of biological role, shows weak antimicrobial activity (tested on E.coli, S.aureus and C.albicans). Shows high hemolytic activity against human erythrocytes (38% erythrocyte lysis at 80.0 uM, and up to 85% at 159.7 uM). The chain is Bombinins BLP-7/H-BO from Bombina orientalis (Oriental fire-bellied toad).